Here is a 472-residue protein sequence, read N- to C-terminus: Selenium-binding protein 2 (472 aa).

Position 467 is a phosphoserine (Ser467).

It belongs to the selenium-binding protein family. The N-terminus is blocked. As to expression, mainly expressed in liver.

Its subcellular location is the nucleus. It localises to the cytoplasm. The protein resides in the cytosol. The protein localises to the membrane. Selenium- and acetaminophen-binding protein which may be involved in the sensing of reactive xenobiotics in the cytoplasm. May be involved in intra-Golgi protein transport. The polypeptide is Selenium-binding protein 2 (Selenbp2) (Mus musculus (Mouse)).